Here is a 626-residue protein sequence, read N- to C-terminus: 4-hydroxy-3-methylbut-2-en-1-yl diphosphate synthase (flavodoxin) (626 aa).

[4Fe-4S] cluster is bound by residues Cys521, Cys524, Cys555, and Glu562.

The protein belongs to the IspG family. [4Fe-4S] cluster is required as a cofactor.

It catalyses the reaction (2E)-4-hydroxy-3-methylbut-2-enyl diphosphate + oxidized [flavodoxin] + H2O + 2 H(+) = 2-C-methyl-D-erythritol 2,4-cyclic diphosphate + reduced [flavodoxin]. It functions in the pathway isoprenoid biosynthesis; isopentenyl diphosphate biosynthesis via DXP pathway; isopentenyl diphosphate from 1-deoxy-D-xylulose 5-phosphate: step 5/6. Its function is as follows. Converts 2C-methyl-D-erythritol 2,4-cyclodiphosphate (ME-2,4cPP) into 1-hydroxy-2-methyl-2-(E)-butenyl 4-diphosphate. This is 4-hydroxy-3-methylbut-2-en-1-yl diphosphate synthase (flavodoxin) from Bacteroides fragilis (strain ATCC 25285 / DSM 2151 / CCUG 4856 / JCM 11019 / LMG 10263 / NCTC 9343 / Onslow / VPI 2553 / EN-2).